We begin with the raw amino-acid sequence, 315 residues long: FGFR1 oncogene partner 2 homolog (315 aa).

2 coiled-coil regions span residues 32–99 (EEAE…RAME) and 156–183 (VVQR…ISKQ). Disordered regions lie at residues 201-222 (KAVQ…SGAS) and 238-315 (PEQP…APAT). Over residues 246 to 269 (GTTNSFNTAPVHSQSETQAPSVTL) the composition is skewed to polar residues.

This sequence belongs to the SIKE family.

In Drosophila melanogaster (Fruit fly), this protein is FGFR1 oncogene partner 2 homolog.